The chain runs to 310 residues: tRNA dimethylallyltransferase (310 aa).

Position 11–18 (11–18) interacts with ATP; sequence GPTAVGKT. 13 to 18 provides a ligand contact to substrate; sequence TAVGKT. The tract at residues 36–39 is interaction with substrate tRNA; it reads DSMQ.

Belongs to the IPP transferase family. In terms of assembly, monomer. It depends on Mg(2+) as a cofactor.

The enzyme catalyses adenosine(37) in tRNA + dimethylallyl diphosphate = N(6)-dimethylallyladenosine(37) in tRNA + diphosphate. Functionally, catalyzes the transfer of a dimethylallyl group onto the adenine at position 37 in tRNAs that read codons beginning with uridine, leading to the formation of N6-(dimethylallyl)adenosine (i(6)A). This is tRNA dimethylallyltransferase from Shouchella clausii (strain KSM-K16) (Alkalihalobacillus clausii).